Here is a 212-residue protein sequence, read N- to C-terminus: MAIGLIGRKVGMTRIFTEDGVSIPVTVIEVAGNRVTQVKTLETDGYRALQVTTGTKKANRITKPEAGHFAKSGVEAGRGLWEMRLVDGEGEGIEVGAELNVDIFADVAKVDVTGQSKGKGFQGGVKRWNFRTQDMTHGNSLSHRSNGSIGQNQTPGRVFKGKKMSGHMGAERVTTQNLVVVRVDVERNLLLVRGAVPGATNGDLIIKPAVKA.

Residues 136–155 are disordered; that stretch reads THGNSLSHRSNGSIGQNQTP. At glutamine 153 the chain carries N5-methylglutamine.

This sequence belongs to the universal ribosomal protein uL3 family. As to quaternary structure, part of the 50S ribosomal subunit. Forms a cluster with proteins L14 and L19. Methylated by PrmB.

Functionally, one of the primary rRNA binding proteins, it binds directly near the 3'-end of the 23S rRNA, where it nucleates assembly of the 50S subunit. This Shewanella baltica (strain OS223) protein is Large ribosomal subunit protein uL3.